We begin with the raw amino-acid sequence, 309 residues long: Taste receptor type 2 member 20 (309 aa).

The Extracellular portion of the chain corresponds to 1-6 (MMSFLH). The helical transmembrane segment at 7 to 27 (IVFSILVVVAFILGNFANGFI) threads the bilayer. Residues 28–46 (ALINFIAWVKRQKISSADQ) lie on the Cytoplasmic side of the membrane. The chain crosses the membrane as a helical span at residues 47 to 67 (IIAALAVSRVGLLWVILLHWY). The Extracellular portion of the chain corresponds to 68–79 (STVLNPTSSNLK). Residues 80 to 100 (VTIFISNAWAVTNHFSIWLAA) traverse the membrane as a helical segment. Over 101–125 (SLSIFYLLKIVNFSRLIFHHLKRKA) the chain is Cytoplasmic. A helical membrane pass occupies residues 126-146 (KSVVLVIVLGSLFFLVCHLVM). Over 147–178 (KSTYINVWTEEYEGNVTWKIKLRNAMHLSNLT) the chain is Extracellular. 2 N-linked (GlcNAc...) asparagine glycosylation sites follow: Asn161 and Asn176. Residues 179-199 (VAMLANLIPFTLTLISFLLLI) traverse the membrane as a helical segment. The Cytoplasmic portion of the chain corresponds to 200 to 229 (YSLCKHLKKMQLHGKGSQDPSTKIHIKALQ). A helical transmembrane segment spans residues 230-250 (TVTSFLILLAIYFLCLITSFW). Over 251-259 (NSKMRPKEI) the chain is Extracellular. A helical transmembrane segment spans residues 260–280 (VLMLCQAFGIIYPSFHSFILI). The Cytoplasmic portion of the chain corresponds to 281–309 (WGNKTLKQTFLSVLWRVTCWAKGQNQSTP).

Belongs to the G-protein coupled receptor T2R family.

The protein localises to the membrane. In terms of biological role, receptor that may play a role in the perception of bitterness and is gustducin-linked. May play a role in sensing the chemical composition of the gastrointestinal content. The activity of this receptor may stimulate alpha gustducin, mediate PLC-beta-2 activation and lead to the gating of TRPM5. In Gorilla gorilla gorilla (Western lowland gorilla), this protein is Taste receptor type 2 member 20 (TAS2R20).